The following is a 377-amino-acid chain: Metallo-hydrolase mfmC (377 aa).

Zn(2+) is bound by residues His-126, His-128, Asp-130, His-131, His-209, and Asp-233.

This sequence belongs to the metallo-beta-lactamase superfamily.

It participates in secondary metabolite biosynthesis; terpenoid biosynthesis. Functionally, metallo-hydrolase; part of the gene cluster that mediates the biosynthesis of the phthalide-terpenoid hybrid 11'-O-desmethylfendlerol. Within the pathway, mfma and mfmC act together to convert 3,5-dimethylorsellinic acid (DMOA) into the phthalide 5,7-dihydroxy-4-(hydroxymethyl)-6-methylphthalide. The biosynthesis of 11'-O-desmethylfendlerol begins with the NR-PKS mfmB that forms 3,5-dimethylorsellinic acid (DMOA), which is then transformed into the phthalide 5,7-dihydroxy-4-(hydroxymethyl)-6-methylphthalide by the cytochrome P450 monooxygenase mfmA and the hydrolase mfmC. Subsequently, the methyltransferase mfmE catalyzes 7-O-methylation to yield 5-hydroxy-4-(hydroxymethyl)-7-methoxy-6-methylphthalide, which undergoes C-3 hydroxylation by the cytochrome P450 monooxygenase mfmF. The resultant cyclopolic acid (2,5-dihydroxy-4-(hydroxymethyl)-7-methoxy-6-methylphthalide) is then farnesylated by the DMATS-type prenyltransferase mfmD to afford 5-O-farnesylcyclopolic acid. Finally, the Pyr4-family terpene cyclase mfmH cyclizes the farnesyl moiety of 5-O-farnesylcyclopolic acid into a drimane-like structure, thus completing the biosynthesis of 11'-O-desmethylfendlerol. This chain is Metallo-hydrolase mfmC, found in Annulohypoxylon moriforme (Filamentous fungus).